Reading from the N-terminus, the 355-residue chain is NADH dehydrogenase-like protein YutJ (355 aa).

The protein belongs to the NADH dehydrogenase family. FAD serves as cofactor.

The chain is NADH dehydrogenase-like protein YutJ (yutJ) from Bacillus subtilis (strain 168).